We begin with the raw amino-acid sequence, 285 residues long: 2-methoxy-6-polyprenyl-1,4-benzoquinol methylase, mitochondrial (285 aa).

A mitochondrion-targeting transit peptide spans 1–30; the sequence is MKGATNLFKSMRKPTNVGNFRQFSVNQVNS. S-adenosyl-L-methionine contacts are provided by residues threonine 106, aspartate 126, 156 to 157, and serine 173; that span reads NA.

The protein belongs to the class I-like SAM-binding methyltransferase superfamily. MenG/UbiE family. Component of a multi-subunit COQ enzyme complex.

It is found in the mitochondrion inner membrane. The enzyme catalyses a 2-methoxy-6-(all-trans-polyprenyl)benzene-1,4-diol + S-adenosyl-L-methionine = a 5-methoxy-2-methyl-3-(all-trans-polyprenyl)benzene-1,4-diol + S-adenosyl-L-homocysteine + H(+). Its pathway is cofactor biosynthesis; ubiquinone biosynthesis. Its function is as follows. Methyltransferase required for the conversion of 2-polyprenyl-6-methoxy-1,4-benzoquinol (DDMQH2) to 2-polyprenyl-3-methyl-6-methoxy-1,4-benzoquinol (DMQH2). The protein is 2-methoxy-6-polyprenyl-1,4-benzoquinol methylase, mitochondrial of Caenorhabditis elegans.